The chain runs to 219 residues: Asperlin biosynthesis cluster protein I (219 aa).

A disordered region spans residues 97–124 (TGSSDNSPTATGIGAAGLTGDRPSSSGA). A compositionally biased stretch (low complexity) spans 105–116 (TATGIGAAGLTG).

The protein operates within polyketide biosynthesis. In terms of biological role, part of the gene cluster that mediates the biosynthesis of asperlin, a polyketide showing anti-inflammatory, antitumor and antibiotic activities. The first step of the asperlin biosynthesis is the production of the intermediate 2,4,6-octatrienoic acid by the highly redusing polyketide synthase alnA with cleavage of the PKS product by the esterase alnB. 2,4,6-octatrienoic acid is further converted to asperlin via several steps involving the remaining enzymes from the cluster. This Emericella nidulans (strain FGSC A4 / ATCC 38163 / CBS 112.46 / NRRL 194 / M139) (Aspergillus nidulans) protein is Asperlin biosynthesis cluster protein I.